The primary structure comprises 221 residues: Cytidylate kinase 1 (221 aa).

Glycine 7–serine 15 contributes to the ATP binding site.

The protein belongs to the cytidylate kinase family. Type 1 subfamily.

It localises to the cytoplasm. It carries out the reaction CMP + ATP = CDP + ADP. The enzyme catalyses dCMP + ATP = dCDP + ADP. This is Cytidylate kinase 1 from Borreliella afzelii (strain PKo) (Borrelia afzelii).